Consider the following 461-residue polypeptide: Protein DVR-1 homolog (461 aa).

The signal sequence occupies residues 1–30 (MEYSRKTYLDLNIMAKYILILSLFFGPGLS). The propeptide occupies 31–338 (WDVFYSGDED…QKKGGKRPRK (308 aa)). The N-linked (GlcNAc...) asparagine glycan is linked to Asn-149. The interval 317–351 (SHLRRNRRAATRQKKGGKRPRKPDTDNDIASRDSA) is disordered. The segment covering 318-337 (HLRRNRRAATRQKKGGKRPR) has biased composition (basic residues). Basic and acidic residues predominate over residues 338–347 (KPDTDNDIAS). Disulfide bonds link Cys-360/Cys-426, Cys-389/Cys-458, and Cys-393/Cys-460. Asn-402 carries N-linked (GlcNAc...) asparagine glycosylation.

The protein belongs to the TGF-beta family. Homodimer; disulfide-linked.

The protein localises to the secreted. This chain is Protein DVR-1 homolog (DVR1), found in Strongylocentrotus purpuratus (Purple sea urchin).